Here is a 277-residue protein sequence, read N- to C-terminus: MATSGMVSPTSGRPFSPMRSSVLTTTGSAIKLEHVSEKFAGLWTDLEQEKQARRIAEATRMQLFQESVLRLEKSMEAEVKRRAESDKQLQAHFEGELRVLHERSACQVAEMHNSLKSAIDSFSSRVQDLHAVIREERDQRRNDIEHLATSLVGKVNECVAALDEERTIRMQEQAMALKRFGEDISGVNHRVDTEKAQREADLSGLRVEIHDVLANRNIQDEQFKTVTLDELNAFKAALALEREERVAEDDEIVQAINDYTRALQEGLKMVNMQHNSA.

Residues 1–20 (MATSGMVSPTSGRPFSPMRS) form a disordered region. The tract at residues 1–27 (MATSGMVSPTSGRPFSPMRSSVLTTTG) is nonhelical region. Positions 28 to 277 (SAIKLEHVSE…KMVNMQHNSA (250 aa)) are rod. Positions 70-90 (RLEKSMEAEVKRRAESDKQLQ) form a coiled coil.

This sequence belongs to the SF-assemblin family. In terms of processing, the N-terminus is blocked.

The protein resides in the cytoplasm. The protein localises to the cytoskeleton. Functionally, major component of the striated microtubule-associated fibers (SMAFs; system-I-fibers). The chain is SF-assemblin from Dunaliella bioculata (Green alga).